Reading from the N-terminus, the 237-residue chain is Orotidine 5'-phosphate decarboxylase (237 aa).

Residues Asp-17, Lys-39, 66 to 75, Thr-121, Arg-182, Gln-191, Gly-211, and Arg-212 each bind substrate; that span reads DLKLHDIGNT. Lys-68 serves as the catalytic Proton donor.

This sequence belongs to the OMP decarboxylase family. Type 1 subfamily. As to quaternary structure, homodimer.

The catalysed reaction is orotidine 5'-phosphate + H(+) = UMP + CO2. Its pathway is pyrimidine metabolism; UMP biosynthesis via de novo pathway; UMP from orotate: step 2/2. Its function is as follows. Catalyzes the decarboxylation of orotidine 5'-monophosphate (OMP) to uridine 5'-monophosphate (UMP). The chain is Orotidine 5'-phosphate decarboxylase from Rhodopseudomonas palustris (strain TIE-1).